The following is a 320-amino-acid chain: Nucleotide-binding protein Acid_7395 (320 aa).

Positions 1 to 34 (MPLRKKGAATTKAAATRKDSAKAPASSKRKDAPQ) are disordered. 44-51 (GLSGSGKG) is a binding site for ATP. Position 94-97 (94-97 (DIRE)) interacts with GTP.

It belongs to the RapZ-like family.

In terms of biological role, displays ATPase and GTPase activities. The protein is Nucleotide-binding protein Acid_7395 of Solibacter usitatus (strain Ellin6076).